The primary structure comprises 297 residues: Phosphatidylinositol N-acetylglucosaminyltransferase subunit C (297 aa).

The next 4 helical transmembrane spans lie at 67–87 (VFVVIWWYMDEGLLAPQWLFG), 88–108 (TGLASSLIGYVLFDFIDGGEG), 153–173 (AVFMLLGHLIFFDYGANAAIV), and 239–259 (ALGGLLSISAVGAILFALLLI).

This sequence belongs to the PIGC family. As to quaternary structure, component of the glycosylphosphatidylinositol-N-acetylglucosaminyltransferase (GPI-GnT) complex composed at least by PIGA, PIGC, PIGH, PIGP, PIGQ, PIGY and DPM2. Interacts with PIGQ. Interacts with the heterodimer PIGA:PIGH.

It localises to the endoplasmic reticulum membrane. The protein operates within glycolipid biosynthesis; glycosylphosphatidylinositol-anchor biosynthesis. In terms of biological role, part of the glycosylphosphatidylinositol-N-acetylglucosaminyltransferase (GPI-GnT) complex that catalyzes the transfer of N-acetylglucosamine from UDP-N-acetylglucosamine to phosphatidylinositol and participates in the first step of GPI biosynthesis. This Bos taurus (Bovine) protein is Phosphatidylinositol N-acetylglucosaminyltransferase subunit C.